A 969-amino-acid chain; its full sequence is Alpha-glucosidase (969 aa).

A signal peptide spans 1–24 (MMISTAYQSLFLTALFSAISIAVG). N-linked (GlcNAc...) asparagine glycans are attached at residues Asn37, Asn67, Asn99, Asn116, Asn139, Asn146, Asn209, Asn245, Asn249, Asn331, Asn406, Asn429, Asn462, and Asn470. Asp481 acts as the Nucleophile in catalysis. Residue Glu484 is part of the active site. N-linked (GlcNAc...) asparagine glycans are attached at residues Asn520, Asn523, and Asn589. Asp647 serves as the catalytic Proton donor. N-linked (GlcNAc...) asparagine glycosylation is found at Asn648, Asn801, Asn810, Asn821, Asn885, Asn915, Asn934, Asn942, Asn954, and Asn966.

Belongs to the glycosyl hydrolase 31 family.

Its subcellular location is the secreted. It carries out the reaction Hydrolysis of terminal, non-reducing (1-&gt;4)-linked alpha-D-glucose residues with release of alpha-D-glucose.. Its function is as follows. Hydrolyzes malto-oligosaccharides, but has a low activity toward soluble starch. The protein is Alpha-glucosidase (agl1) of Schizosaccharomyces pombe (strain 972 / ATCC 24843) (Fission yeast).